A 173-amino-acid polypeptide reads, in one-letter code: MSALVCVARIGAAHGVRGAVKLWTFTEDPFAIKRYGPLLSKDGKRQFEVAQAREAKDHLVATFKGVTTRDEAERLNGIELYVAREKLPATDEDEYYHTDLIGLAAVTTDGEPLGRVLAIHNFGAGDIIEIAPPKGASLLLPFSNAVVPEVDVAGGRVVVALPQEIAGDEAEER.

Residues 92 to 165 (EDEYYHTDLI…RVVVALPQEI (74 aa)) form the PRC barrel domain.

The protein belongs to the RimM family. In terms of assembly, binds ribosomal protein uS19.

It is found in the cytoplasm. In terms of biological role, an accessory protein needed during the final step in the assembly of 30S ribosomal subunit, possibly for assembly of the head region. Essential for efficient processing of 16S rRNA. May be needed both before and after RbfA during the maturation of 16S rRNA. It has affinity for free ribosomal 30S subunits but not for 70S ribosomes. This chain is Ribosome maturation factor RimM, found in Bradyrhizobium diazoefficiens (strain JCM 10833 / BCRC 13528 / IAM 13628 / NBRC 14792 / USDA 110).